Reading from the N-terminus, the 493-residue chain is Phenmedipham hydrolase (493 aa).

The Acyl-ester intermediate role is filled by Ser188. Catalysis depends on charge relay system residues Glu307 and His402.

Belongs to the type-B carboxylesterase/lipase family. Monomer.

May degrade the phenylcarbamate herbicides phenmedipham and desmedipham cometabolically by hydrolyzing their central carbamate linkages. Conveys resistance to the herbicide phenmedipham. This is Phenmedipham hydrolase (pcd) from Pseudarthrobacter oxydans (Arthrobacter oxydans).